The sequence spans 3172 residues: Erythronolide synthase EryA3 (3172 aa).

Residues 38-452 (GEPIAIVGMA…GTNAHVIVEE (415 aa)) enclose the Ketosynthase family 3 (KS3) 1 domain. Module stretches follow at residues 41-1464 (IAIV…DHYL) and 1492-2891 (IAIV…DHIG). Residue Cys-199 is the Acyl-thioester intermediate; for beta-ketoacyl synthase 1 activity of the active site. Residues His-334 and His-374 each act as for beta-ketoacyl synthase 1 activity in the active site. Positions 557–874 (VFPGQGAQWQ…LGEAYAQGVE (318 aa)) are acyltransferase 1. Catalysis depends on Ser-643, which acts as the Acyl-ester intermediate; for acyltransferase 1 activity. Residues 1117–1294 (GTVLVTGGTG…VTSIAWGLWA (178 aa)) are beta-ketoacyl reductase 1. NADP(+) is bound by residues 1125 to 1128 (TGGI), 1148 to 1151 (GRRG), 1177 to 1178 (DV), Lys-1229, and 1249 to 1250 (FS). Residue Tyr-1264 is the Acyl-ester intermediate; for beta-ketoacyl reductase 1 activity of the active site. The Carrier 1 domain occupies 1392 to 1467 (EHLAHLIRAE…RLADHYLERL (76 aa)). Ser-1427 carries the post-translational modification O-(pantetheine 4'-phosphoryl)serine. The Ketosynthase family 3 (KS3) 2 domain occupies 1489 to 1916 (DDPIAIVGMA…GTNAHVIIAE (428 aa)). Catalysis depends on Cys-1661, which acts as the Acyl-thioester intermediate; for beta-ketoacyl synthase 2 activity. Catalysis depends on for beta-ketoacyl synthase 2 activity residues His-1797 and His-1837. The interval 2022–2331 (VFVFPGQGAQ…LARAHVHGVA (310 aa)) is acyltransferase 2. Ser-2112 (acyl-ester intermediate; for acyltransferase 2 activity) is an active-site residue. A beta-ketoacyl reductase 2 region spans residues 2557–2731 (GTALVTGGTG…ATSVAWGAWA (175 aa)). NADP(+)-binding positions include 2565–2568 (TGAL), 2588–2591 (SRRG), 2617–2618 (DV), Lys-2666, and 2686–2687 (FS). Tyr-2701 serves as the catalytic Acyl-ester intermediate; for beta-ketoacyl reductase 2 activity. Positions 2819 to 2894 (QELLEFTHSH…RLADHIGQQL (76 aa)) constitute a Carrier 2 domain. Ser-2854 is modified (O-(pantetheine 4'-phosphoryl)serine). The thioesterase stretch occupies residues 2960-3166 (ICCAGTAAIS…DAIARHIDAW (207 aa)). Thr-2965 contributes to the substrate binding site. The active-site Nucleophile; for thioesterase activity is the Ser-3031. Residues Ala-3032 and Asp-3058 each coordinate substrate. The active-site Proton acceptor; for thioesterase activity is His-3148.

Homodimer. Erythronolide synthase is composed of EryAI, EryAII and EryAIII multimodular (2 modules) polypeptides each coding for a functional synthase subunit which participates in 2 of the six FAS-like elongation steps required for formation of the polyketide. Module 1, 2, 3, 4, 5, and 6 participating in biosynthesis steps 1, 2, 3, 4, 5, and 6, respectively. Requires pantetheine 4'-phosphate as cofactor.

The catalysed reaction is 6 (S)-methylmalonyl-CoA + propanoyl-CoA + 6 NADPH + 12 H(+) = 6-deoxyerythronolide B + 6 CO2 + 6 NADP(+) + 7 CoA + H2O. It participates in antibiotic biosynthesis; erythromycin biosynthesis. With respect to regulation, inhibited by diphenyl phosphonates derivatives such as diphenyl allylphosphonate. Functionally, involved in the biosynthesis of antibiotic erythromycin via the biosynthesis of its aglycone precursor, 6-deoxyerythronolide B (6-dEB). The polypeptide is Erythronolide synthase EryA3 (Saccharopolyspora erythraea (Streptomyces erythraeus)).